We begin with the raw amino-acid sequence, 416 residues long: Leu/Ile/Val-binding protein homolog 4 (416 aa).

The signal sequence occupies residues 1 to 26; that stretch reads MSLKVFLQAGVACAALSLAGAAGASA.

This sequence belongs to the leucine-binding protein family.

Its function is as follows. Component of an amino-acid transport system. The chain is Leu/Ile/Val-binding protein homolog 4 from Brucella melitensis biotype 1 (strain ATCC 23456 / CCUG 17765 / NCTC 10094 / 16M).